The chain runs to 477 residues: Kinesin-like protein KIN-1 (477 aa).

One can recognise a Kinesin motor domain in the interval 3-330 (NVTVCVRFRP…VRFGTRTKLI (328 aa)). An ATP-binding site is contributed by 86 to 93 (GQTGAGKT). A coiled-coil region spans residues 402–451 (QDAASQEVSLLTQAVEELKETVEELTDENERLRGELELAQEAAAAAAAAR).

Belongs to the TRAFAC class myosin-kinesin ATPase superfamily. Kinesin family. KIN-1 subfamily. In terms of tissue distribution, widely expressed. Expressed in young roots and leaves, in mature roots, culm, sheath and leaves, and in panicles at various developmental stages. Strongest expression is detected in panicles. In the panicle, expression is detected in anthers, glumme, lemma and palea. In the spikelet, expression is detected in both microsporocyte and the anther walls.

Its subcellular location is the cytoplasm. Kinesin-like motor protein that exhibits microtubule-stimulated ATPase activity. Plays an essential role in male meiotic chromosomal dynamics, male gametogenesis and anther dehiscence. May play a minor and nonessential role in regulating meiotic spindle formation. This chain is Kinesin-like protein KIN-1, found in Oryza sativa subsp. japonica (Rice).